Reading from the N-terminus, the 590-residue chain is TPR repeat-containing protein PA4667 (590 aa).

TPR repeat units follow at residues 235 to 268, 269 to 302, 370 to 403, 405 to 438, and 508 to 541; these read VAPL…HPDD, KRVR…FPDD, LPAQ…QPDY, IQLY…YPED, and PAIL…YPDH.

This is TPR repeat-containing protein PA4667 from Pseudomonas aeruginosa (strain ATCC 15692 / DSM 22644 / CIP 104116 / JCM 14847 / LMG 12228 / 1C / PRS 101 / PAO1).